The following is a 378-amino-acid chain: Protein RecA (378 aa).

79–86 serves as a coordination point for ATP; that stretch reads GPESSGKT.

The protein belongs to the RecA family.

The protein resides in the cytoplasm. Functionally, can catalyze the hydrolysis of ATP in the presence of single-stranded DNA, the ATP-dependent uptake of single-stranded DNA by duplex DNA, and the ATP-dependent hybridization of homologous single-stranded DNAs. It interacts with LexA causing its activation and leading to its autocatalytic cleavage. This chain is Protein RecA, found in Streptococcus pyogenes serotype M1.